Reading from the N-terminus, the 300-residue chain is Protoheme IX farnesyltransferase (300 aa).

The next 9 helical transmembrane spans lie at 24–44, 48–68, 94–114, 118–138, 146–166, 172–192, 217–237, 239–259, and 278–298; these read VTQL…PGMV, VLLG…AINC, LQIL…LYTF, LTMW…TLLL, IVIG…AVTG, AWIL…VLAL, LHIL…FISG, SGAV…AYAW, and IVYL…RPVI.

Belongs to the UbiA prenyltransferase family. Protoheme IX farnesyltransferase subfamily.

It localises to the cell inner membrane. The enzyme catalyses heme b + (2E,6E)-farnesyl diphosphate + H2O = Fe(II)-heme o + diphosphate. The protein operates within porphyrin-containing compound metabolism; heme O biosynthesis; heme O from protoheme: step 1/1. Functionally, converts heme B (protoheme IX) to heme O by substitution of the vinyl group on carbon 2 of heme B porphyrin ring with a hydroxyethyl farnesyl side group. This chain is Protoheme IX farnesyltransferase, found in Burkholderia pseudomallei (strain 1106a).